Here is an 88-residue protein sequence, read N- to C-terminus: Small ribosomal subunit protein uS17 (88 aa).

The protein belongs to the universal ribosomal protein uS17 family. In terms of assembly, part of the 30S ribosomal subunit.

Its function is as follows. One of the primary rRNA binding proteins, it binds specifically to the 5'-end of 16S ribosomal RNA. The polypeptide is Small ribosomal subunit protein uS17 (Azotobacter vinelandii (strain DJ / ATCC BAA-1303)).